The sequence spans 189 residues: Interferon alpha-17 (189 aa).

The first 23 residues, 1-23, serve as a signal peptide directing secretion; the sequence is MALSFSLLMAVLVLSYKSICSLG. 2 disulfide bridges follow: Cys-24–Cys-122 and Cys-52–Cys-162.

This sequence belongs to the alpha/beta interferon family.

It is found in the secreted. Functionally, produced by macrophages, IFN-alpha have antiviral activities. Interferon stimulates the production of two enzymes: a protein kinase and an oligoadenylate synthetase. This chain is Interferon alpha-17 (IFNA17), found in Homo sapiens (Human).